The chain runs to 276 residues: ARL14 effector protein (276 aa).

The interval 159 to 183 is disordered; it reads QTEFAPESGKREKRKLTKNASASSD. A Glycyl lysine isopeptide (Lys-Gly) (interchain with G-Cter in SUMO2) cross-link involves residue K176. Phosphoserine occurs at positions 182 and 266.

Interacts with ARL14 and MYO1E.

Its subcellular location is the cytoplasm. Functionally, through its interaction with ARL14 and MYO1E, may connect MHC class II-containing cytoplasmic vesicles to the actin network and hence controls the movement of these vesicles along the actin cytoskeleton in dendritic cells. This is ARL14 effector protein (Arl14ep) from Rattus norvegicus (Rat).